The following is a 163-amino-acid chain: ATP synthase subunit b 1 (163 aa).

Residues 7–27 (AETWVAVAFVILMALFAYLGV) traverse the membrane as a helical segment.

The protein belongs to the ATPase B chain family. F-type ATPases have 2 components, F(1) - the catalytic core - and F(0) - the membrane proton channel. F(1) has five subunits: alpha(3), beta(3), gamma(1), delta(1), epsilon(1). F(0) has three main subunits: a(1), b(2) and c(10-14). The alpha and beta chains form an alternating ring which encloses part of the gamma chain. F(1) is attached to F(0) by a central stalk formed by the gamma and epsilon chains, while a peripheral stalk is formed by the delta and b chains.

The protein localises to the cell inner membrane. Functionally, f(1)F(0) ATP synthase produces ATP from ADP in the presence of a proton or sodium gradient. F-type ATPases consist of two structural domains, F(1) containing the extramembraneous catalytic core and F(0) containing the membrane proton channel, linked together by a central stalk and a peripheral stalk. During catalysis, ATP synthesis in the catalytic domain of F(1) is coupled via a rotary mechanism of the central stalk subunits to proton translocation. Its function is as follows. Component of the F(0) channel, it forms part of the peripheral stalk, linking F(1) to F(0). This is ATP synthase subunit b 1 from Rhodopseudomonas palustris (strain BisB5).